Reading from the N-terminus, the 94-residue chain is Defensin-7 (94 aa).

Positions 1–19 (MRTLTLLSAFLLVALQAWA) are cleaved as a signal peptide. 2 cysteine pairs are disulfide-bonded: Cys65–Cys93 and Cys72–Cys92.

This sequence belongs to the alpha-defensin family.

Its subcellular location is the secreted. Its function is as follows. Has antimicrobial activity. In Pan troglodytes (Chimpanzee), this protein is Defensin-7 (DEFA7).